The chain runs to 463 residues: L-seryl-tRNA(Sec) selenium transferase (463 aa).

Lys-295 is modified (N6-(pyridoxal phosphate)lysine).

The protein belongs to the SelA family. As to quaternary structure, homodecamer; pentamer of dimers. Binds only one seryl-tRNA(Sec) per dimer. The cofactor is pyridoxal 5'-phosphate.

The protein resides in the cytoplasm. The enzyme catalyses L-seryl-tRNA(Sec) + selenophosphate + H(+) = L-selenocysteinyl-tRNA(Sec) + phosphate. Its pathway is aminoacyl-tRNA biosynthesis; selenocysteinyl-tRNA(Sec) biosynthesis; selenocysteinyl-tRNA(Sec) from L-seryl-tRNA(Sec) (bacterial route): step 1/1. In terms of biological role, converts seryl-tRNA(Sec) to selenocysteinyl-tRNA(Sec) required for selenoprotein biosynthesis. The polypeptide is L-seryl-tRNA(Sec) selenium transferase (Escherichia fergusonii (strain ATCC 35469 / DSM 13698 / CCUG 18766 / IAM 14443 / JCM 21226 / LMG 7866 / NBRC 102419 / NCTC 12128 / CDC 0568-73)).